A 184-amino-acid chain; its full sequence is U3 small nucleolar ribonucleoprotein protein IMP3 (184 aa).

Positions 109–175 (RRLPTLLLKL…IKRHVLEYNE (67 aa)) constitute an S4 RNA-binding domain.

It belongs to the universal ribosomal protein uS4 family. As to quaternary structure, part of the small subunit (SSU) processome, composed of more than 70 proteins and the RNA chaperone small nucleolar RNA (snoRNA) U3. Component of a heterotrimeric complex containing IMP3, IMP4 and MPHOSPH10. Interacts with MPHOSPH10.

The protein resides in the nucleus. It localises to the nucleolus. In terms of biological role, component of the 60-80S U3 small nucleolar ribonucleoprotein (U3 snoRNP). Required for the early cleavages during pre-18S ribosomal RNA processing. Part of the small subunit (SSU) processome, first precursor of the small eukaryotic ribosomal subunit. During the assembly of the SSU processome in the nucleolus, many ribosome biogenesis factors, an RNA chaperone and ribosomal proteins associate with the nascent pre-rRNA and work in concert to generate RNA folding, modifications, rearrangements and cleavage as well as targeted degradation of pre-ribosomal RNA by the RNA exosome. In Mus musculus (Mouse), this protein is U3 small nucleolar ribonucleoprotein protein IMP3 (Imp3).